A 444-amino-acid polypeptide reads, in one-letter code: tRNA modification GTPase MnmE (444 aa).

Arg-25, Glu-83, and Lys-122 together coordinate (6S)-5-formyl-5,6,7,8-tetrahydrofolate. The TrmE-type G domain maps to 218 to 370; that stretch reads GFKVAIVGKP…IVGRLRDYLD (153 aa). GTP-binding positions include 228–233, 247–253, and 272–275; these read NVGKSS, SDEAGTT, and DTAG. The Mg(2+) site is built by Ser-232 and Thr-253. Lys-444 lines the (6S)-5-formyl-5,6,7,8-tetrahydrofolate pocket.

It belongs to the TRAFAC class TrmE-Era-EngA-EngB-Septin-like GTPase superfamily. TrmE GTPase family. As to quaternary structure, homodimer. Heterotetramer of two MnmE and two MnmG subunits. Requires K(+) as cofactor.

Its subcellular location is the cytoplasm. Functionally, exhibits a very high intrinsic GTPase hydrolysis rate. Involved in the addition of a carboxymethylaminomethyl (cmnm) group at the wobble position (U34) of certain tRNAs, forming tRNA-cmnm(5)s(2)U34. The chain is tRNA modification GTPase MnmE from Campylobacter curvus (strain 525.92).